An 893-amino-acid chain; its full sequence is DNA mismatch repair protein MutS (893 aa).

Position 637–644 (637–644 (GPNMGGKS)) interacts with ATP.

It belongs to the DNA mismatch repair MutS family.

In terms of biological role, this protein is involved in the repair of mismatches in DNA. It is possible that it carries out the mismatch recognition step. This protein has a weak ATPase activity. The polypeptide is DNA mismatch repair protein MutS (Burkholderia thailandensis (strain ATCC 700388 / DSM 13276 / CCUG 48851 / CIP 106301 / E264)).